The primary structure comprises 204 residues: Large ribosomal subunit protein uL13 (204 aa).

It belongs to the universal ribosomal protein uL13 family.

The polypeptide is Large ribosomal subunit protein uL13 (RpL13A) (Choristoneura parallela (Spotted fireworm moth)).